The chain runs to 592 residues: MAAAVAAALARLLAAFLLLAAQVACEYGMVHVVSQAGGPEGKDYCILYNPQWAHLPHDLSKASFLQLRNWTASLLCSAADLPARGFSNQIPLVARGNCTFYEKVRLAQGSGARGLLIVSRERLVPPGGNKTQYDEIGIPVALLSYKDMLDIFTRFGRTVRAALYAPKEPVLDYNMVIIFIMAVGTVAIGGYWAGSRDVKKRYMKHKRDDGPEKQEDEAVDVTPVMTCVFVVMCCSMLVLLYYFYDLLVYVVIGIFCLASATGLYSCLAPCVRRLPFGKCRIPNNSLPYFHKRPQARMLLLALFCVAVSVVWGVFRNEDQWAWVLQDALGIAFCLYMLKTIRLPTFKACTLLLLVLFLYDIFFVFITPFLTKSGSSIMVEVATGPSDSATREKLPMVLKVPRLNSSPLALCDRPFSLLGFGDILVPGLLVAYCHRFDIQVQSSRVYFVACTIAYGVGLLVTFVALALMQRGQPALLYLVPCTLVTSCAVALWRRELGVFWTGSGFAKVLPPSPWAPAPADGPQPPKDSATPLSPQPPSEEPATSPWPAEQSPKSRTSEEMGAGAPMREPGSPAESEGRDQAQPSPVTQPGASA.

Residues M1–C25 form the signal peptide. The Lumenal portion of the chain corresponds to E26–N174. The PA domain occupies T71–L149. N97 and N129 each carry an N-linked (GlcNAc...) asparagine glycan. Residues M175 to S195 form a helical membrane-spanning segment. The Cytoplasmic portion of the chain corresponds to R196 to V221. Residues T222 to Y244 form a helical membrane-spanning segment. At D245–V248 the chain is on the lumenal side. Residues Y249–V271 form a helical membrane-spanning segment. Topologically, residues R272–P293 are cytoplasmic. Residues Q294–F314 traverse the membrane as a helical segment. The Lumenal segment spans residues R315–Q319. The chain crosses the membrane as a helical span at residues W320 to I340. The Cytoplasmic segment spans residues R341–C348. Residues T349–L369 form a helical membrane-spanning segment. Residue D359 is part of the active site. Residues T370 to R412 are Lumenal-facing. A helical membrane pass occupies residues P413–H433. D421 is a catalytic residue. Topologically, residues R434–Y445 are cytoplasmic. A helical transmembrane segment spans residues F446–L466. Residues M467–G470 lie on the Lumenal side of the membrane. A helical transmembrane segment spans residues Q471 to W491. Residues P472–L474 carry the PAL motif. Over R492 to A592 the chain is Cytoplasmic. Residues P512–P524 are compositionally biased toward pro residues. Positions P512–A592 are disordered. Residues A580 to A592 are compositionally biased toward polar residues.

Belongs to the peptidase A22B family. As to quaternary structure, monomer. Homodimer. Interacts with ITM2B. Interacts with TNF. Interacts with the simian foamy virus envelope glycoprotein gp130 and its processed leader peptide gp18LP; preferentially interacts with the leader peptide gp18LP. Glycosylated. In terms of tissue distribution, expressed predominantly in adrenal cortex and mammary gland.

Its subcellular location is the cell membrane. The protein resides in the golgi apparatus membrane. It localises to the lysosome membrane. The protein localises to the endosome membrane. It is found in the membrane. Its function is as follows. Intramembrane-cleaving aspartic protease (I-CLiP) that cleaves type II membrane signal peptides in the hydrophobic plane of the membrane. Functions in ITM2B and TNF processing. Catalyzes the intramembrane cleavage of the anchored fragment of shed TNF-alpha (TNF), which promotes the release of the intracellular domain (ICD) for signaling to the nucleus. May play a role in the regulation of innate and adaptive immunity. Catalyzes the intramembrane cleavage of the simian foamy virus processed leader peptide gp18 of the envelope glycoprotein gp130 dependently of prior ectodomain shedding by furin or furin-like proprotein convertase (PC)-mediated cleavage proteolysis. The sequence is that of Signal peptide peptidase-like 2B from Homo sapiens (Human).